We begin with the raw amino-acid sequence, 321 residues long: Cytochrome c biogenesis protein CcsA (321 aa).

Helical transmembrane passes span 17–37, 48–68, 71–91, 98–118, 143–163, 225–245, 259–273, and 286–306; these read VVSIVIIIHFLTLLVNEFVGL, TFFCLTGLLITRWIYSGHLPI, LYESLIFLSWIFSIIHMVPYF, LSTITAPSTFFTQGFATWGLL, MVSGYAALLCGSLLSAALLVI, ILSIGFLFLTIGILSGAVWAN, TWAFITWTIFAIYFH, and AIVASIGFLIIWICYFGVNLL.

The protein belongs to the CcmF/CycK/Ccl1/NrfE/CcsA family. May interact with Ccs1.

The protein localises to the plastid. It is found in the chloroplast thylakoid membrane. Its function is as follows. Required during biogenesis of c-type cytochromes (cytochrome c6 and cytochrome f) at the step of heme attachment. The chain is Cytochrome c biogenesis protein CcsA from Populus trichocarpa (Western balsam poplar).